A 387-amino-acid polypeptide reads, in one-letter code: Acetylserotonin O-methyltransferase (387 aa).

Residues Y153, W170, E216, 246–248 (GDF), and R263 contribute to the S-adenosyl-L-methionine site. H266 (proton donor/acceptor) is an active-site residue. Positions 267 and 317 each coordinate substrate. The segment at 354 to 387 (AARGGGAGARSDGGGGDATSQTGSGTGSEVGAQD) is disordered. The span at 356–370 (RGGGAGARSDGGGGD) shows a compositional bias: gly residues.

This sequence belongs to the class I-like SAM-binding methyltransferase superfamily. Cation-independent O-methyltransferase family. In terms of assembly, homodimer. As to expression, expressed predominantly in the pineal gland (at protein level). Very low expression, if any, in the retina.

The catalysed reaction is N-acetylserotonin + S-adenosyl-L-methionine = melatonin + S-adenosyl-L-homocysteine + H(+). The protein operates within aromatic compound metabolism; melatonin biosynthesis; melatonin from serotonin: step 1/2. In terms of biological role, catalyzes the transfer of a methyl group onto N-acetylserotonin, producing melatonin (N-acetyl-5-methoxytryptamine). The sequence is that of Acetylserotonin O-methyltransferase (Asmt) from Mus musculus (Mouse).